Here is a 754-residue protein sequence, read N- to C-terminus: 5-methyltetrahydropteroyltriglutamate--homocysteine methyltransferase (754 aa).

5-methyltetrahydropteroyltri-L-glutamate contacts are provided by residues 17–20 (RELK) and Lys-117. Residues 431–433 (IGS) and Glu-484 each bind L-homocysteine. Residues 431–433 (IGS) and Glu-484 each bind L-methionine. Residues 515-516 (RC) and Trp-561 each bind 5-methyltetrahydropteroyltri-L-glutamate. Residue Asp-599 coordinates L-homocysteine. Asp-599 contacts L-methionine. Glu-605 is a binding site for 5-methyltetrahydropteroyltri-L-glutamate. The Zn(2+) site is built by His-641, Cys-643, and Glu-665. Catalysis depends on His-694, which acts as the Proton donor. Cys-726 is a Zn(2+) binding site.

Belongs to the vitamin-B12 independent methionine synthase family. It depends on Zn(2+) as a cofactor.

The catalysed reaction is 5-methyltetrahydropteroyltri-L-glutamate + L-homocysteine = tetrahydropteroyltri-L-glutamate + L-methionine. It functions in the pathway amino-acid biosynthesis; L-methionine biosynthesis via de novo pathway; L-methionine from L-homocysteine (MetE route): step 1/1. Its function is as follows. Catalyzes the transfer of a methyl group from 5-methyltetrahydrofolate to homocysteine resulting in methionine formation. The sequence is that of 5-methyltetrahydropteroyltriglutamate--homocysteine methyltransferase from Salmonella paratyphi B (strain ATCC BAA-1250 / SPB7).